We begin with the raw amino-acid sequence, 370 residues long: F-box/kelch-repeat protein At4g38940 (370 aa).

Residues 18–64 form the F-box domain; that stretch reads PCLISLLPEEIVVDIVARVPRCYYPTLSQVSRRFRSLVASPEIYKRR. Kelch repeat units lie at residues 131–177, 178–230, and 263–315; these read NIFV…LIDR, KIYV…VIGG, and SACV…SYTG.

As to quaternary structure, part of a SCF (ASK-cullin-F-box) protein ligase complex. Interacts with SKP1A/ASK1, SKP1B/ASK2, ASK11, ASK13 and ASK18.

The protein resides in the nucleus. It functions in the pathway protein modification; protein ubiquitination. In terms of biological role, component of SCF(ASK-cullin-F-box) E3 ubiquitin ligase complexes, which may mediate the ubiquitination and subsequent proteasomal degradation of target proteins. The polypeptide is F-box/kelch-repeat protein At4g38940 (Arabidopsis thaliana (Mouse-ear cress)).